The primary structure comprises 412 residues: Probable beta-1,4-xylosyltransferase IRX10 (412 aa).

The helical; Signal-anchor for type II membrane protein transmembrane segment at 1-21 (MKIHSCLSAILLFLFFSASSA) threads the bilayer. Topologically, residues 22–412 (KQNVRTERIS…AGPVADLKPW (391 aa)) are lumenal. 2 N-linked (GlcNAc...) asparagine glycosylation sites follow: Asn139 and Asn400.

This sequence belongs to the glycosyltransferase 47 family. In terms of tissue distribution, limited to xylem cells. Expressed in the root tip, xylem cells of roots, and in the vasculature of roots, cotyledons and leaves.

It localises to the golgi apparatus membrane. Functionally, involved in the synthesis of the hemicellulose glucuronoxylan, a major component of secondary cell walls. Probably involved in the elongation of glucuronoxylan xylosyl backbone, especially in the formation of GlcUA side chain of xylans. This chain is Probable beta-1,4-xylosyltransferase IRX10 (IRX10), found in Arabidopsis thaliana (Mouse-ear cress).